Consider the following 240-residue polypeptide: MPTLGVNIDHVATIRQARRTVEPDPVAAAVLAELAGADGITVHLREDRRHIQDRDVEVLRKTVRTHLNLEMAATAEMVEIALRIQPDYVTLVPEKREEVTTEGGLDVIGQQTHMADVVQTLQAANIPVSLFIDADAAQIEAAAQVQAKFIELHTGTYAEAKGEAQQTQELDVLKQGCDRAAALGLRVNAGHGLTYWNTYPVACLPGMEELNIGHTIISRSVLVGLERAVREMKDVIAGRG.

Residue Asn7 coordinates 3-amino-2-oxopropyl phosphate. Position 9–10 (9–10) interacts with 1-deoxy-D-xylulose 5-phosphate; the sequence is DH. Residue Arg18 coordinates 3-amino-2-oxopropyl phosphate. The Proton acceptor role is filled by His43. 2 residues coordinate 1-deoxy-D-xylulose 5-phosphate: Arg45 and His50. Residue Glu70 is the Proton acceptor of the active site. Thr100 serves as a coordination point for 1-deoxy-D-xylulose 5-phosphate. His191 (proton donor) is an active-site residue. 3-amino-2-oxopropyl phosphate is bound by residues Gly192 and 213 to 214; that span reads GH.

The protein belongs to the PNP synthase family. In terms of assembly, homooctamer; tetramer of dimers.

The protein resides in the cytoplasm. It catalyses the reaction 3-amino-2-oxopropyl phosphate + 1-deoxy-D-xylulose 5-phosphate = pyridoxine 5'-phosphate + phosphate + 2 H2O + H(+). It functions in the pathway cofactor biosynthesis; pyridoxine 5'-phosphate biosynthesis; pyridoxine 5'-phosphate from D-erythrose 4-phosphate: step 5/5. In terms of biological role, catalyzes the complicated ring closure reaction between the two acyclic compounds 1-deoxy-D-xylulose-5-phosphate (DXP) and 3-amino-2-oxopropyl phosphate (1-amino-acetone-3-phosphate or AAP) to form pyridoxine 5'-phosphate (PNP) and inorganic phosphate. This chain is Pyridoxine 5'-phosphate synthase, found in Acaryochloris marina (strain MBIC 11017).